Here is a 212-residue protein sequence, read N- to C-terminus: Phosphoribosyl-dephospho-CoA transferase (212 aa).

Residues Asp139 and Asp141 contribute to the active site.

It belongs to the MdcG family.

It carries out the reaction apo-[malonate decarboxylase ACP] + 2'-(5''-triphospho-alpha-D-ribosyl)-3'-dephospho-CoA = holo-[malonate decarboxylase ACP] + diphosphate. In terms of biological role, transfers 2'-(5-triphosphoribosyl)-3'-dephosphocoenzyme-A to the apo-[acyl-carrier-protein] of the malonate decarboxylase to yield holo-[acyl-carrier-protein]. The sequence is that of Phosphoribosyl-dephospho-CoA transferase from Azotobacter vinelandii (strain DJ / ATCC BAA-1303).